Reading from the N-terminus, the 392-residue chain is Succinate--CoA ligase [ADP-forming] subunit beta (392 aa).

One can recognise an ATP-grasp domain in the interval 9 to 248; it reads KGILKQFGVA…ITEEDPLEYE (240 aa). Residues Lys50, 57–59, Glu103, Met106, and Glu111 contribute to the ATP site; that span reads GRG. Asn203 and Asp217 together coordinate Mg(2+). Residues Asn268 and 325-327 contribute to the substrate site; that span reads GIV.

The protein belongs to the succinate/malate CoA ligase beta subunit family. As to quaternary structure, heterotetramer of two alpha and two beta subunits. Requires Mg(2+) as cofactor.

It catalyses the reaction succinate + ATP + CoA = succinyl-CoA + ADP + phosphate. The catalysed reaction is GTP + succinate + CoA = succinyl-CoA + GDP + phosphate. The protein operates within carbohydrate metabolism; tricarboxylic acid cycle; succinate from succinyl-CoA (ligase route): step 1/1. Functionally, succinyl-CoA synthetase functions in the citric acid cycle (TCA), coupling the hydrolysis of succinyl-CoA to the synthesis of either ATP or GTP and thus represents the only step of substrate-level phosphorylation in the TCA. The beta subunit provides nucleotide specificity of the enzyme and binds the substrate succinate, while the binding sites for coenzyme A and phosphate are found in the alpha subunit. This is Succinate--CoA ligase [ADP-forming] subunit beta from Chlorobaculum parvum (strain DSM 263 / NCIMB 8327) (Chlorobium vibrioforme subsp. thiosulfatophilum).